A 265-amino-acid polypeptide reads, in one-letter code: Homeobox protein CDX-1 (265 aa).

The segment at K9 to T153 is disordered. The span at Y30–Y42 shows a compositional bias: pro residues. Over residues A73–F92 the composition is skewed to low complexity. Positions G93–G108 are enriched in pro residues. Over residues G110–G126 the composition is skewed to low complexity. Positions K154–N213 form a DNA-binding region, homeobox. The segment at Y157–Y178 is interaction with DNA. The interval R196–A207 is interaction with 5-mCpG DNA. Basic residues predominate over residues A207–Q217. The segment at A207–P265 is disordered. The span at P245–P256 shows a compositional bias: polar residues.

Belongs to the Caudal homeobox family. In terms of tissue distribution, intestinal epithelium.

The protein localises to the nucleus. Its function is as follows. Plays a role in transcriptional regulation. Involved in activated KRAS-mediated transcriptional activation of PRKD1 in colorectal cancer (CRC) cells. Binds to the PRKD1 promoter in colorectal cancer (CRC) cells. Could play a role in the terminal differentiation of the intestine. Binds preferentially to methylated DNA. This chain is Homeobox protein CDX-1 (CDX1), found in Homo sapiens (Human).